A 258-amino-acid polypeptide reads, in one-letter code: Ribosomal RNA small subunit methyltransferase A (258 aa).

The S-adenosyl-L-methionine site is built by Asn-12, Leu-14, Gly-38, Glu-59, Asp-83, and Asn-100.

It belongs to the class I-like SAM-binding methyltransferase superfamily. rRNA adenine N(6)-methyltransferase family. RsmA subfamily.

The protein localises to the cytoplasm. The enzyme catalyses adenosine(1518)/adenosine(1519) in 16S rRNA + 4 S-adenosyl-L-methionine = N(6)-dimethyladenosine(1518)/N(6)-dimethyladenosine(1519) in 16S rRNA + 4 S-adenosyl-L-homocysteine + 4 H(+). Functionally, specifically dimethylates two adjacent adenosines (A1518 and A1519) in the loop of a conserved hairpin near the 3'-end of 16S rRNA in the 30S particle. May play a critical role in biogenesis of 30S subunits. This is Ribosomal RNA small subunit methyltransferase A from Metamycoplasma arthritidis (strain 158L3-1) (Mycoplasma arthritidis).